The primary structure comprises 308 residues: Oligopeptide transport ATP-binding protein OppF (308 aa).

One can recognise an ABC transporter domain in the interval 9 to 254 (VEVKNVSLTF…PIHPYTQSLL (246 aa)). An ATP-binding site is contributed by 46–53 (GESGSGKT).

This sequence belongs to the ABC transporter superfamily. The complex is composed of two ATP-binding proteins (OppD and OppF), two transmembrane proteins (OppB and OppC) and a solute-binding protein (OppA).

Its subcellular location is the cell membrane. It carries out the reaction a [peptide](out) + ATP + H2O = a [peptide](in) + ADP + phosphate + H(+). Its function is as follows. Part of the ABC transporter complex OppABCDF involved in the uptake of oligopeptides. Probably responsible for energy coupling to the transport system. The protein is Oligopeptide transport ATP-binding protein OppF (oppF) of Streptococcus mutans serotype c (strain ATCC 700610 / UA159).